A 248-amino-acid polypeptide reads, in one-letter code: 3-deoxy-manno-octulosonate cytidylyltransferase (248 aa).

The protein belongs to the KdsB family.

Its subcellular location is the cytoplasm. It catalyses the reaction 3-deoxy-alpha-D-manno-oct-2-ulosonate + CTP = CMP-3-deoxy-beta-D-manno-octulosonate + diphosphate. It participates in nucleotide-sugar biosynthesis; CMP-3-deoxy-D-manno-octulosonate biosynthesis; CMP-3-deoxy-D-manno-octulosonate from 3-deoxy-D-manno-octulosonate and CTP: step 1/1. Its pathway is bacterial outer membrane biogenesis; lipopolysaccharide biosynthesis. Functionally, activates KDO (a required 8-carbon sugar) for incorporation into bacterial lipopolysaccharide in Gram-negative bacteria. This chain is 3-deoxy-manno-octulosonate cytidylyltransferase, found in Klebsiella pneumoniae (strain 342).